The chain runs to 87 residues: Protein U62 (87 aa).

This sequence belongs to the herpesviridae UL91 family.

This chain is Protein U62 (U62), found in Human herpesvirus 6B (strain Z29) (HHV-6 variant B).